Here is a 342-residue protein sequence, read N- to C-terminus: Holliday junction branch migration complex subunit RuvB (342 aa).

Positions methionine 1 to tyrosine 179 are large ATPase domain (RuvB-L). Residues isoleucine 18, arginine 19, glycine 60, lysine 63, threonine 64, threonine 65, glutamate 126–phenylalanine 128, arginine 169, tyrosine 179, and arginine 216 contribute to the ATP site. Residue threonine 64 coordinates Mg(2+). Residues asparagine 180–glutamate 250 are small ATPAse domain (RuvB-S). The segment at cysteine 253–glutamate 342 is head domain (RuvB-H). Positions 289, 308, and 313 each coordinate DNA.

It belongs to the RuvB family. Homohexamer. Forms an RuvA(8)-RuvB(12)-Holliday junction (HJ) complex. HJ DNA is sandwiched between 2 RuvA tetramers; dsDNA enters through RuvA and exits via RuvB. An RuvB hexamer assembles on each DNA strand where it exits the tetramer. Each RuvB hexamer is contacted by two RuvA subunits (via domain III) on 2 adjacent RuvB subunits; this complex drives branch migration. In the full resolvosome a probable DNA-RuvA(4)-RuvB(12)-RuvC(2) complex forms which resolves the HJ.

The protein localises to the cytoplasm. The catalysed reaction is ATP + H2O = ADP + phosphate + H(+). Its function is as follows. The RuvA-RuvB-RuvC complex processes Holliday junction (HJ) DNA during genetic recombination and DNA repair, while the RuvA-RuvB complex plays an important role in the rescue of blocked DNA replication forks via replication fork reversal (RFR). RuvA specifically binds to HJ cruciform DNA, conferring on it an open structure. The RuvB hexamer acts as an ATP-dependent pump, pulling dsDNA into and through the RuvAB complex. RuvB forms 2 homohexamers on either side of HJ DNA bound by 1 or 2 RuvA tetramers; 4 subunits per hexamer contact DNA at a time. Coordinated motions by a converter formed by DNA-disengaged RuvB subunits stimulates ATP hydrolysis and nucleotide exchange. Immobilization of the converter enables RuvB to convert the ATP-contained energy into a lever motion, pulling 2 nucleotides of DNA out of the RuvA tetramer per ATP hydrolyzed, thus driving DNA branch migration. The RuvB motors rotate together with the DNA substrate, which together with the progressing nucleotide cycle form the mechanistic basis for DNA recombination by continuous HJ branch migration. Branch migration allows RuvC to scan DNA until it finds its consensus sequence, where it cleaves and resolves cruciform DNA. This chain is Holliday junction branch migration complex subunit RuvB, found in Rickettsia africae (strain ESF-5).